The sequence spans 678 residues: Serine/threonine-protein kinase PLK (678 aa).

The region spanning 22-309 (YRPGKLLGKG…VKECLDHSWL (288 aa)) is the Protein kinase domain. ATP is bound by residues 28–36 (LGKGGFAYV) and Lys-51. Residue Asp-145 is the Proton acceptor of the active site. A phosphothreonine; by autocatalysis mark is found at Thr-179 and Thr-183. POLO box domains lie at 435–516 (YIMS…YLEN) and 563–644 (FLKK…IIKA). A disordered region spans residues 658 to 678 (KDSTKKSASGSSTRQLGQGGE). Positions 663 to 678 (KSASGSSTRQLGQGGE) are enriched in polar residues.

Belongs to the protein kinase superfamily. Ser/Thr protein kinase family. CDC5/Polo subfamily. Interacts with Kin-13. Autophosphorylated. Autophosphorylation is critical for its function in cell growth, cytokinesis and formation of flagella.

The protein localises to the cell projection. The protein resides in the cilium. It is found in the flagellum. Its subcellular location is the cytoplasm. It localises to the cytoskeleton. The protein localises to the flagellum basal body. The protein resides in the flagellum axoneme. It is found in the spindle. Its subcellular location is the membrane. The enzyme catalyses L-seryl-[protein] + ATP = O-phospho-L-seryl-[protein] + ADP + H(+). The catalysed reaction is L-threonyl-[protein] + ATP = O-phospho-L-threonyl-[protein] + ADP + H(+). Its activity is regulated as follows. Inhibited by GW843286X (GW), an ATP-competitive inhibitor. Inhibition leads to reduced growth, increased number of cells with more than four nuclei, increased number of cells with condensed nuclei, cell cycle arrest at G2/M or G1/S phase depending on the treatment time with GW, and increased length of membrane-bound portions of the caudal and anterior flagella. In terms of biological role, involved in cell cycle. Involved in cell division. Involved in cytokinesis. Involved in flagella biogenesis and in regulation of flagella length in interphase. Involved in formation of median bodies during interphase. Phosphorylates Kin-13 in vitro. Likely regulates microtubule (MT) depolymerizing activity of Kin-13. The sequence is that of Serine/threonine-protein kinase PLK from Giardia intestinalis (strain ATCC 50803 / WB clone C6) (Giardia lamblia).